A 128-amino-acid polypeptide reads, in one-letter code: Cystatin-12 (128 aa).

A signal peptide spans 1–21 (MLWKSVLPVALIVLGIHDCSF). Disulfide bonds link Cys-82–Cys-92 and Cys-105–Cys-125. A glycan (N-linked (GlcNAc...) asparagine) is linked at Asn-122.

Belongs to the cystatin family.

It is found in the secreted. Functionally, may play a specialized role in spermatogenesis. The protein is Cystatin-12 (Cst12) of Rattus norvegicus (Rat).